The following is a 173-amino-acid chain: Methylated-DNA--protein-cysteine methyltransferase (173 aa).

The active-site Nucleophile; methyl group acceptor is cysteine 143.

Belongs to the MGMT family.

It is found in the cytoplasm. It carries out the reaction a 6-O-methyl-2'-deoxyguanosine in DNA + L-cysteinyl-[protein] = S-methyl-L-cysteinyl-[protein] + a 2'-deoxyguanosine in DNA. It catalyses the reaction a 4-O-methyl-thymidine in DNA + L-cysteinyl-[protein] = a thymidine in DNA + S-methyl-L-cysteinyl-[protein]. Involved in the cellular defense against the biological effects of O6-methylguanine (O6-MeG) and O4-methylthymine (O4-MeT) in DNA. Repairs the methylated nucleobase in DNA by stoichiometrically transferring the methyl group to a cysteine residue in the enzyme. This is a suicide reaction: the enzyme is irreversibly inactivated. The polypeptide is Methylated-DNA--protein-cysteine methyltransferase (Pyrococcus sp. (strain NA2)).